Reading from the N-terminus, the 126-residue chain is 14 kDa phosphohistidine phosphatase (126 aa).

Lys-22 serves as a coordination point for substrate. His-54 functions as the Proton acceptor in the catalytic mechanism. 95 to 97 lines the substrate pocket; the sequence is SMG.

This sequence belongs to the janus family. In terms of assembly, monomer.

The protein localises to the cytoplasm. It catalyses the reaction N(pros)-phospho-L-histidyl-[protein] + H2O = L-histidyl-[protein] + phosphate. The enzyme catalyses N(tele)-phospho-L-histidyl-[protein] + H2O = L-histidyl-[protein] + phosphate. Functionally, exhibits phosphohistidine phosphatase activity. This chain is 14 kDa phosphohistidine phosphatase (PHPT1), found in Sus scrofa (Pig).